The following is a 256-amino-acid chain: Carboxysome shell protein CsoS1D (256 aa).

Residues 1–24 (MEPTSSLNRGDRKKGSSLVTGSEV) are disordered. BMC circularly permuted domains follow at residues 55–157 (ELRT…RTKP) and 158–256 (STSW…ISNY). Positions 120–121 (ER) match the Gates the pore motif.

The protein belongs to the EutL/PduB family. Homotrimer. Forms a dimer of stacked trimers, the same faces interact. A CsoS1-CsoS1D-CsoS2 complex can be isolated following expression in E.coli.

Its subcellular location is the carboxysome. Functionally, part of the carboxysome shell, a polyhedral inclusion where RuBisCO (ribulose bisphosphate carboxylase, cbbL-cbbS) is sequestered. It may control transport of RuBisCO reactants in and out of the carboxysome. There are estimated to be 6 CsoS1D hexamers per carboxysome. The polypeptide is Carboxysome shell protein CsoS1D (Prochlorococcus marinus subsp. pastoris (strain CCMP1986 / NIES-2087 / MED4)).